A 134-amino-acid chain; its full sequence is Translation initiation factor 5A (134 aa).

At Lys36 the chain carries Hypusine.

The protein belongs to the eIF-5A family.

Its subcellular location is the cytoplasm. Functionally, functions by promoting the formation of the first peptide bond. The chain is Translation initiation factor 5A (eIF5A) from Korarchaeum cryptofilum (strain OPF8).